Consider the following 429-residue polypeptide: Adenylosuccinate synthetase (429 aa).

GTP is bound by residues 12 to 18 (GDEGKGK) and 40 to 42 (GHT). Asp-13 (proton acceptor) is an active-site residue. Mg(2+) contacts are provided by Asp-13 and Gly-40. Residues 13–16 (DEGK), 38–41 (NAGH), Thr-129, Arg-143, Gln-223, Thr-238, and Arg-302 each bind IMP. His-41 acts as the Proton donor in catalysis. 298–304 (TVTGRKR) is a binding site for substrate. GTP is bound by residues Arg-304, 330 to 332 (KLD), and 412 to 414 (STS).

It belongs to the adenylosuccinate synthetase family. In terms of assembly, homodimer. Mg(2+) serves as cofactor.

The protein localises to the cytoplasm. It carries out the reaction IMP + L-aspartate + GTP = N(6)-(1,2-dicarboxyethyl)-AMP + GDP + phosphate + 2 H(+). Its pathway is purine metabolism; AMP biosynthesis via de novo pathway; AMP from IMP: step 1/2. Its function is as follows. Plays an important role in the de novo pathway of purine nucleotide biosynthesis. Catalyzes the first committed step in the biosynthesis of AMP from IMP. The sequence is that of Adenylosuccinate synthetase from Novosphingobium aromaticivorans (strain ATCC 700278 / DSM 12444 / CCUG 56034 / CIP 105152 / NBRC 16084 / F199).